The chain runs to 112 residues: Putative pterin-4-alpha-carbinolamine dehydratase (112 aa).

It belongs to the pterin-4-alpha-carbinolamine dehydratase family.

The catalysed reaction is (4aS,6R)-4a-hydroxy-L-erythro-5,6,7,8-tetrahydrobiopterin = (6R)-L-erythro-6,7-dihydrobiopterin + H2O. The chain is Putative pterin-4-alpha-carbinolamine dehydratase from Shewanella halifaxensis (strain HAW-EB4).